The following is a 441-amino-acid chain: Glutamyl-tRNA reductase (441 aa).

Substrate contacts are provided by residues 47–50 (TCNR), Ser-104, 109–111 (EAQ), and Gln-115. Residue Cys-48 is the Nucleophile of the active site. 184–189 (GAGEMG) contributes to the NADP(+) binding site.

This sequence belongs to the glutamyl-tRNA reductase family. In terms of assembly, homodimer.

The catalysed reaction is (S)-4-amino-5-oxopentanoate + tRNA(Glu) + NADP(+) = L-glutamyl-tRNA(Glu) + NADPH + H(+). It functions in the pathway porphyrin-containing compound metabolism; protoporphyrin-IX biosynthesis; 5-aminolevulinate from L-glutamyl-tRNA(Glu): step 1/2. Its function is as follows. Catalyzes the NADPH-dependent reduction of glutamyl-tRNA(Glu) to glutamate 1-semialdehyde (GSA). In Myxococcus xanthus (strain DK1622), this protein is Glutamyl-tRNA reductase.